The following is a 275-amino-acid chain: Ribosomal RNA small subunit methyltransferase A (275 aa).

Positions 28, 30, 55, 77, 103, and 123 each coordinate S-adenosyl-L-methionine.

It belongs to the class I-like SAM-binding methyltransferase superfamily. rRNA adenine N(6)-methyltransferase family. RsmA subfamily.

It localises to the cytoplasm. It carries out the reaction adenosine(1518)/adenosine(1519) in 16S rRNA + 4 S-adenosyl-L-methionine = N(6)-dimethyladenosine(1518)/N(6)-dimethyladenosine(1519) in 16S rRNA + 4 S-adenosyl-L-homocysteine + 4 H(+). In terms of biological role, specifically dimethylates two adjacent adenosines (A1518 and A1519) in the loop of a conserved hairpin near the 3'-end of 16S rRNA in the 30S particle. May play a critical role in biogenesis of 30S subunits. This chain is Ribosomal RNA small subunit methyltransferase A, found in Rhizobium johnstonii (strain DSM 114642 / LMG 32736 / 3841) (Rhizobium leguminosarum bv. viciae).